The chain runs to 208 residues: Protein-L-isoaspartate O-methyltransferase (208 aa).

The active site involves serine 59.

This sequence belongs to the methyltransferase superfamily. L-isoaspartyl/D-aspartyl protein methyltransferase family.

Its subcellular location is the cytoplasm. It catalyses the reaction [protein]-L-isoaspartate + S-adenosyl-L-methionine = [protein]-L-isoaspartate alpha-methyl ester + S-adenosyl-L-homocysteine. Catalyzes the methyl esterification of L-isoaspartyl residues in peptides and proteins that result from spontaneous decomposition of normal L-aspartyl and L-asparaginyl residues. It plays a role in the repair and/or degradation of damaged proteins. The chain is Protein-L-isoaspartate O-methyltransferase from Escherichia coli (strain K12 / MC4100 / BW2952).